Here is a 187-residue protein sequence, read N- to C-terminus: Elongation factor P (187 aa).

Belongs to the elongation factor P family.

The protein resides in the cytoplasm. The protein operates within protein biosynthesis; polypeptide chain elongation. Involved in peptide bond synthesis. Stimulates efficient translation and peptide-bond synthesis on native or reconstituted 70S ribosomes in vitro. Probably functions indirectly by altering the affinity of the ribosome for aminoacyl-tRNA, thus increasing their reactivity as acceptors for peptidyl transferase. In Chromobacterium violaceum (strain ATCC 12472 / DSM 30191 / JCM 1249 / CCUG 213 / NBRC 12614 / NCIMB 9131 / NCTC 9757 / MK), this protein is Elongation factor P.